The chain runs to 1595 residues: A disintegrin and metalloproteinase with thrombospondin motifs 7 (1595 aa).

The N-terminal stretch at 1-20 is a signal peptide; that stretch reads MHRGLNLLLILCALAPHVLG. Positions 21–217 are excised as a propeptide; that stretch reads PASGLPTEGR…QRQQKRRQQR (197 aa). 2 N-linked (GlcNAc...) asparagine glycosylation sites follow: Asn-84 and Asn-105. Residues 165-218 form a disordered region; the sequence is PGHAQPHMVYKHKRSGQQDDSRTSGTCGVQGSPELKHQREHWEQRQQKRRQQRS. The Cysteine switch motif lies at 189-196; the sequence is GTCGVQGS. Cys-191 lines the Zn(2+) pocket. Over residues 198-210 the composition is skewed to basic and acidic residues; sequence ELKHQREHWEQRQ. A Peptidase M12B domain is found at 223–434; the sequence is KWVETLVVAD…GWGLCLDDRP (212 aa). Disulfide bonds link Cys-299–Cys-353, Cys-328–Cys-335, Cys-347–Cys-429, Cys-386–Cys-413, Cys-456–Cys-479, Cys-467–Cys-485, Cys-474–Cys-504, Cys-498–Cys-509, Cys-532–Cys-569, Cys-536–Cys-574, and Cys-547–Cys-559. Position 369 (His-369) interacts with Zn(2+). Glu-370 is a catalytic residue. Zn(2+) is bound by residues His-373 and His-379. In terms of domain architecture, Disintegrin spans 444–519; it reads VLPGVLYDVN…VPEGFQPETV (76 aa). Residues 520-575 form the TSP type-1 1 domain; it reads DGGWSGWSAWSVCSRSCGVGVRSSERQCTQPVPKNKGKYCVGERKRYRLCNLQACP. A glycan (N-linked (GlcNAc...) asparagine) is linked at Asn-619. Residues 680–791 form a spacer region; the sequence is HTVSRTFKEA…PGVHYKYTIQ (112 aa). TSP type-1 domains lie at 801-860, 861-917, and 922-975; these read PEFS…EPCP, ARWW…IPCY, and CPSS…QPCQ. Disordered regions lie at residues 989–1035, 1077–1121, 1179–1234, and 1255–1315; these read GSSS…LDPP, PPHI…SHSP, REDT…LSPD, and KPVH…APTD. Composition is skewed to pro residues over residues 1005–1015 and 1079–1089; these read QPVPRPSPASS and HIRPTEPPSDS. Residues 1220-1232 are compositionally biased toward low complexity; the sequence is SSPSNSTTQASLS. A compositionally biased stretch (polar residues) spans 1268-1280; the sequence is QIQTPHTEGTQSP. 4 TSP type-1 domains span residues 1320 to 1368, 1371 to 1431, 1433 to 1476, and 1478 to 1538; these read KNAS…RHCH, PCAA…QPCL, WYTS…PCNT, and PCTQ…EDCE. In terms of domain architecture, PLAC spans 1541-1581; that stretch reads EPSRCERDRLPFNFCETLRLLGRCQLPTIRAQCCRSCPPLS.

Interacts with COMP. Zn(2+) is required as a cofactor. In terms of processing, glycosylated. Can be O-fucosylated by POFUT2 on a serine or a threonine residue found within the consensus sequence C1-X(2)-(S/T)-C2-G of the TSP type-1 repeat domains where C1 and C2 are the first and second cysteine residue of the repeat, respectively. Fucosylated repeats can then be further glycosylated by the addition of a beta-1,3-glucose residue by the glucosyltransferase, B3GALTL. Fucosylation mediates the efficient secretion of ADAMTS family members. Can also be C-glycosylated with one or two mannose molecules on tryptophan residues within the consensus sequence W-X-X-W of the TPRs. N- and C-glycosylations can also facilitate secretion. O-glycosylated proteoglycan; contains chondroitin sulfate. Post-translationally, may be cleaved by a furin endopeptidase. The precursor is sequentially processed. Detected in liver, ovary, kidney, testicle, lung and embryo.

It is found in the secreted. The protein localises to the extracellular space. Its subcellular location is the extracellular matrix. In terms of biological role, metalloprotease. Was previously shown to degrade COMP. However, a later study found no activity against COMP. The polypeptide is A disintegrin and metalloproteinase with thrombospondin motifs 7 (Adamts7) (Rattus norvegicus (Rat)).